A 459-amino-acid polypeptide reads, in one-letter code: Phosphomethylpyrimidine synthase (459 aa).

Substrate contacts are provided by residues N80, M109, Y139, H175, 195–197, 236–239, and E275; these read SRG and DSLR. Position 279 (H279) interacts with Zn(2+). Y302 contributes to the substrate binding site. Zn(2+) is bound at residue H343. Residues C423, C426, and C431 each coordinate [4Fe-4S] cluster.

Belongs to the ThiC family. [4Fe-4S] cluster serves as cofactor.

The enzyme catalyses 5-amino-1-(5-phospho-beta-D-ribosyl)imidazole + S-adenosyl-L-methionine = 4-amino-2-methyl-5-(phosphooxymethyl)pyrimidine + CO + 5'-deoxyadenosine + formate + L-methionine + 3 H(+). It participates in cofactor biosynthesis; thiamine diphosphate biosynthesis. In terms of biological role, catalyzes the synthesis of the hydroxymethylpyrimidine phosphate (HMP-P) moiety of thiamine from aminoimidazole ribotide (AIR) in a radical S-adenosyl-L-methionine (SAM)-dependent reaction. The sequence is that of Phosphomethylpyrimidine synthase from Synechocystis sp. (strain ATCC 27184 / PCC 6803 / Kazusa).